Here is a 178-residue protein sequence, read N- to C-terminus: Large ribosomal subunit protein uL6 (178 aa).

The protein belongs to the universal ribosomal protein uL6 family. In terms of assembly, part of the 50S ribosomal subunit.

Its function is as follows. This protein binds to the 23S rRNA, and is important in its secondary structure. It is located near the subunit interface in the base of the L7/L12 stalk, and near the tRNA binding site of the peptidyltransferase center. The sequence is that of Large ribosomal subunit protein uL6 from Clavibacter sepedonicus (Clavibacter michiganensis subsp. sepedonicus).